A 906-amino-acid chain; its full sequence is Toll-like receptor 12 (906 aa).

Positions 1–21 (MGRYWLLPGLLLSLPLVTGWS) are cleaved as a signal peptide. The Extracellular segment spans residues 22–709 (TSNCLVTEGS…DHCPQTLELK (688 aa)). An N-linked (GlcNAc...) asparagine glycan is attached at asparagine 59. LRR repeat units follow at residues 91–114 (FPGLKVLALSLHLTQLLPGALRGL), 115–140 (GQLQSLSFFDSPLRRSLFLPPDAFSD), 142–170 (ISLQRLHISGPCLDKKAGIRLPPGLQWLG), 198–222 (SWTLQKLDLSSNWKLKMASPGSLQG), 224–247 (QVEILDLTRTPLDAVWLKGLGLQK), 267–290 (HFELQGLIVKESKIGSISQEALAS), 291–314 (CHSLKTLGLSSTGLTKLPPGFLTA), 316–338 (PRLQRLELSGNQLQSAVLCMNET), 341–364 (VSGLTTLDLSGNRLRILPPAAFSC), 366–388 (PHLRELLLRYNQLLSLEGYLFQE), 389–412 (LQQLETLKLDGNPLLHLGKNWLAA), 414–436 (PALTTLSLLDTQIRMSPEPGFWG), 462–484 (LTSLELHIASGTTEHWTLSPAIF), 485–508 (PSLETLTISGGGLKLKLGSQNASG), and 510–533 (FPALQKLSLLKNSLDAFCSQGTSN). An N-linked (GlcNAc...) asparagine glycan is attached at asparagine 336. N-linked (GlcNAc...) asparagine glycosylation is present at asparagine 505. N-linked (GlcNAc...) asparagine glycosylation is present at asparagine 552. 2 LRR repeats span residues 562 to 586 (LPSLRELKLASLQSITQPRSVQLEE) and 591 to 614 (LPQLQALVLSSTGLKSLSAAAFQR). A helical transmembrane segment spans residues 710–730 (LFLASSALVFMLIALPLLQEA). The Cytoplasmic segment spans residues 731–906 (RNSWIPYLQA…FWTWLRSRLG (176 aa)). Residues 759 to 905 (FLFDVFVSHC…GFWTWLRSRL (147 aa)) form the TIR domain.

This sequence belongs to the Toll-like receptor family. As to quaternary structure, binds MYD88 via their respective TIR domains. Macrophages, liver, kidney and bladder epithelial cells.

The protein localises to the membrane. Its function is as follows. Participates in the innate immune response to microbial agents. Acts via MYD88 and TRAF6, leading to NF-kappa-B activation, cytokine secretion and the inflammatory response. Plays a role in preventing infection of internal organs of the urogenital system. In Mus musculus (Mouse), this protein is Toll-like receptor 12.